Reading from the N-terminus, the 428-residue chain is MSAFIVLGAQWGDEGKGKMTDYLAEEANVVVRFQGGNNAGHTVVVGDKEYKLRLIPSGILYEDKLNVIGNGVVVDPKALFEEIEYLEGVGVKISPEKLIVSDRAQLIMPYHKVLDKLKEKARGKNDIGTTGRGIGPCYTDKFERCGIRVCDLLHEDVFIEKLRENVEMKNAYITKVLGGEALNFDEILDEYLGFAKKLRPFVQDTSVKVYDAIKADKTVLFEGAQGMLLDIDYGTYPYVTSSNTTAGGVSSGSGIGPNMITNAVGITKAYTTRVGKGPFPTELLGETGDWIREKGHEYGVNTGRSRRCGWLDLVIIKTAVRVSGLTSLAVTKIDTLAGLEKIKVCVGYKFNDTVIDYFPASLEDLAECEPIYEEFDGWDDSVADVRSYDELPENVKKYLARISEFTGTRISIVGVGPKRDQTMRIDNL.

Residues 12-18 (GDEGKGK) and 40-42 (GHT) contribute to the GTP site. Asp13 functions as the Proton acceptor in the catalytic mechanism. 2 residues coordinate Mg(2+): Asp13 and Gly40. Residues 13-16 (DEGK), 38-41 (NAGH), Thr130, Arg144, Gln225, Thr240, and Arg304 contribute to the IMP site. His41 functions as the Proton donor in the catalytic mechanism. 300–306 (VNTGRSR) lines the substrate pocket. GTP-binding positions include Arg306, 332 to 334 (KID), and 414 to 416 (GVG).

This sequence belongs to the adenylosuccinate synthetase family. Homodimer. The cofactor is Mg(2+).

Its subcellular location is the cytoplasm. The catalysed reaction is IMP + L-aspartate + GTP = N(6)-(1,2-dicarboxyethyl)-AMP + GDP + phosphate + 2 H(+). The protein operates within purine metabolism; AMP biosynthesis via de novo pathway; AMP from IMP: step 1/2. Functionally, plays an important role in the de novo pathway of purine nucleotide biosynthesis. Catalyzes the first committed step in the biosynthesis of AMP from IMP. This Clostridium beijerinckii (strain ATCC 51743 / NCIMB 8052) (Clostridium acetobutylicum) protein is Adenylosuccinate synthetase.